The following is a 787-amino-acid chain: Exocyst complex component SEC15B (787 aa).

This sequence belongs to the SEC15 family. As to quaternary structure, the exocyst complex is composed of SEC3, SEC5, SEC6, SEC8, SEC10, EXO70A1 and EXO84B. Interacts with EXO84B. Binds to EXO70H1 AND EXO70B2. Binds directly to B1L.

It localises to the cytoplasm. The protein localises to the cytosol. Its subcellular location is the cytoskeleton. The protein resides in the phragmoplast. It is found in the secreted. It localises to the cell wall. The protein localises to the extracellular exosome. Its function is as follows. Component of the exocyst complex involved in the docking of exocytic vesicles with fusion sites on the plasma membrane during regulated or polarized secretion. Involved in polarized cell growth and organ morphogenesis. During cytokinesis, involved in cell plate initiation, cell plate maturation and formation of new primary cell wall. In Arabidopsis thaliana (Mouse-ear cress), this protein is Exocyst complex component SEC15B.